Here is a 348-residue protein sequence, read N- to C-terminus: Holliday junction branch migration complex subunit RuvB (348 aa).

The large ATPase domain (RuvB-L) stretch occupies residues 4–184; sequence TDRLIAASGR…FGIVQRLEFY (181 aa). ATP contacts are provided by residues isoleucine 23, arginine 24, glycine 65, lysine 68, threonine 69, threonine 70, 131 to 133, arginine 174, tyrosine 184, and arginine 221; that span reads EDF. Threonine 69 contributes to the Mg(2+) binding site. The small ATPAse domain (RuvB-S) stretch occupies residues 185-255; sequence SNKDLATIVS…VADMALNLLD (71 aa). The segment at 258–348 is head domain (RuvB-H); that stretch reads ERGFDHSDRR…GGEYAAQDDE (91 aa). 3 residues coordinate DNA: arginine 294, arginine 313, and arginine 318.

The protein belongs to the RuvB family. In terms of assembly, homohexamer. Forms an RuvA(8)-RuvB(12)-Holliday junction (HJ) complex. HJ DNA is sandwiched between 2 RuvA tetramers; dsDNA enters through RuvA and exits via RuvB. An RuvB hexamer assembles on each DNA strand where it exits the tetramer. Each RuvB hexamer is contacted by two RuvA subunits (via domain III) on 2 adjacent RuvB subunits; this complex drives branch migration. In the full resolvosome a probable DNA-RuvA(4)-RuvB(12)-RuvC(2) complex forms which resolves the HJ.

It is found in the cytoplasm. The enzyme catalyses ATP + H2O = ADP + phosphate + H(+). Its function is as follows. The RuvA-RuvB-RuvC complex processes Holliday junction (HJ) DNA during genetic recombination and DNA repair, while the RuvA-RuvB complex plays an important role in the rescue of blocked DNA replication forks via replication fork reversal (RFR). RuvA specifically binds to HJ cruciform DNA, conferring on it an open structure. The RuvB hexamer acts as an ATP-dependent pump, pulling dsDNA into and through the RuvAB complex. RuvB forms 2 homohexamers on either side of HJ DNA bound by 1 or 2 RuvA tetramers; 4 subunits per hexamer contact DNA at a time. Coordinated motions by a converter formed by DNA-disengaged RuvB subunits stimulates ATP hydrolysis and nucleotide exchange. Immobilization of the converter enables RuvB to convert the ATP-contained energy into a lever motion, pulling 2 nucleotides of DNA out of the RuvA tetramer per ATP hydrolyzed, thus driving DNA branch migration. The RuvB motors rotate together with the DNA substrate, which together with the progressing nucleotide cycle form the mechanistic basis for DNA recombination by continuous HJ branch migration. Branch migration allows RuvC to scan DNA until it finds its consensus sequence, where it cleaves and resolves cruciform DNA. In Pseudomonas entomophila (strain L48), this protein is Holliday junction branch migration complex subunit RuvB.